We begin with the raw amino-acid sequence, 761 residues long: uncharacterized protein (761 aa).

N-acetylmethionine is present on Met-1. Disordered regions lie at residues 1–82 (MEHQ…SSSS), 229–320 (SNII…SALA), and 590–640 (FNRA…PEQQ). The span at 13–27 (NSGSNRVTVYNGTTL) shows a compositional bias: polar residues. The span at 28 to 45 (PTMPKSATPTSSSTTVTT) shows a compositional bias: low complexity. 4 stretches are compositionally biased toward polar residues: residues 244-259 (TPVS…SSPE), 266-276 (NTTSSSSTSDH), 590-604 (FNRA…STDD), and 627-640 (SKNS…PEQQ).

Post-translationally, phosphorylated by CDC28.

This is an uncharacterized protein from Saccharomyces cerevisiae (strain ATCC 204508 / S288c) (Baker's yeast).